A 611-amino-acid polypeptide reads, in one-letter code: Procollagen galactosyltransferase 1-B (611 aa).

A signal peptide spans 1-24 (MSQAGVERLLKGLQILVLVLRLSA). Asn-85, Asn-173, Asn-370, Asn-373, and Asn-568 each carry an N-linked (GlcNAc...) asparagine glycan. Positions 576-591 (DRAKSRKTHQQEKLRS) are enriched in basic and acidic residues. Positions 576–611 (DRAKSRKTHQQEKLRSEALNTPSMGSPFDNTARDEL) are disordered. Residues 608-611 (RDEL) carry the Prevents secretion from ER motif.

Belongs to the glycosyltransferase 25 family.

The protein localises to the endoplasmic reticulum lumen. It catalyses the reaction (5R)-5-hydroxy-L-lysyl-[collagen] + UDP-alpha-D-galactose = (5R)-5-O-(beta-D-galactosyl)-5-hydroxy-L-lysyl-[collagen] + UDP + H(+). Functionally, beta-galactosyltransferase that transfers beta-galactose to hydroxylysine residues of type I collagen. By acting on collagen glycosylation, facilitates the formation of collagen triple helix. The polypeptide is Procollagen galactosyltransferase 1-B (colgalt1-b) (Xenopus laevis (African clawed frog)).